Here is a 291-residue protein sequence, read N- to C-terminus: MIRSYIRNIILAILSPLLTTPPPLILPPPYEKIIQEITTVLSINNYDDGSLAPIILRLAWHCCATYDMTTNTGGSNGATMRFVPEITDEGNYGLDIARAALEPIKQRYPAISYADLWTLAGKVAIEYMGGPTIIWKSGRVDYTNDRCTPSNGLLPFADKDANHIRKTFTRLGYNDQQTVALIGAHGVGRCHKRFSGWEGKWTRTPKTFSNQFYVVLLNETWSQGEVPETGKTQYFNADKSLIMLNTDMELIRDKSYLHWVEIYAKDEPKFFHDFSSAFAKLLELGIKRETL.

H61 serves as the catalytic Proton acceptor. Residue H185 coordinates heme b. Catalysis depends on W201, which acts as the Tryptophan radical intermediate.

This sequence belongs to the peroxidase family. Cytochrome c peroxidase subfamily. Heme b serves as cofactor.

Its function is as follows. Destroys radicals which are normally produced within the cells and which are toxic to biological systems. In Candida albicans (strain SC5314 / ATCC MYA-2876) (Yeast), this protein is Putative heme-binding peroxidase (CCP2).